Reading from the N-terminus, the 372-residue chain is N-methyl-L-tryptophan oxidase (372 aa).

4–34 is a binding site for FAD; the sequence is DLIIIGSGSVGAAAGYYATRAGLKVLMTDAH. Cys307 is modified (S-8alpha-FAD cysteine).

It belongs to the MSOX/MTOX family. MTOX subfamily. In terms of assembly, monomer. FAD serves as cofactor.

It carries out the reaction N(alpha)-methyl-L-tryptophan + O2 + H2O = L-tryptophan + formaldehyde + H2O2. Its function is as follows. Catalyzes the oxidative demethylation of N-methyl-L-tryptophan. The polypeptide is N-methyl-L-tryptophan oxidase (Salmonella typhi).